The chain runs to 769 residues: Wall-associated receptor kinase-like 10 (769 aa).

Residues 1 to 24 form the signal peptide; the sequence is MSSNCSCSLLSLFSLLLIIDLTVA. Over 25–358 the chain is Extracellular; it reads SSCPKTCGGI…YTCEYTNHRP (334 aa). 8 N-linked (GlcNAc...) asparagine glycosylation sites follow: N58, N114, N134, N182, N187, N237, N262, and N296. Residues 291-351 are atypical EGF-like; the sequence is CLCDYNSTTT…CVNLLGGYTC (61 aa). 3 disulfides stabilise this stretch: C293/C305, C327/C342, and C337/C351. Residues 359–379 form a helical membrane-spanning segment; that stretch reads LVIGLSTSFSTLVFIGGIYWL. Topologically, residues 380 to 769 are cytoplasmic; that stretch reads YKFIRRQRRL…RSDVEPLFPR (390 aa). Residues 433 to 718 form the Protein kinase domain; the sequence is FSLTRILGEG…SYSEDMQPYE (286 aa). ATP is bound by residues 439–447 and K461; that span reads LGEGGQGTV. Y506 carries the phosphotyrosine modification. Residue D559 is the Proton acceptor of the active site. Phosphothreonine occurs at positions 593 and 598. Position 606 is a phosphotyrosine (Y606).

The protein belongs to the protein kinase superfamily. Ser/Thr protein kinase family.

It localises to the membrane. The enzyme catalyses L-seryl-[protein] + ATP = O-phospho-L-seryl-[protein] + ADP + H(+). It carries out the reaction L-threonyl-[protein] + ATP = O-phospho-L-threonyl-[protein] + ADP + H(+). Serine/threonine-protein kinase that may function as a signaling receptor of extracellular matrix component. The polypeptide is Wall-associated receptor kinase-like 10 (WAKL10) (Arabidopsis thaliana (Mouse-ear cress)).